Reading from the N-terminus, the 668-residue chain is RING finger protein 214 (668 aa).

Disordered regions lie at residues 1–87 (MAAS…AHEE) and 103–125 (NGSQ…TSLR). A2 is subject to N-acetylalanine. S15, S40, S48, and S54 each carry phosphoserine. The segment covering 43–59 (KQKNLSPPSVSSQMITK) has biased composition (polar residues). A compositionally biased stretch (basic and acidic residues) spans 60-71 (ESNRNAHLEHPE). S196 is modified (phosphoserine). The stretch at 220 to 379 (QDIEKNLDKM…AEKEAELHLT (160 aa)) forms a coiled coil. The interval 486 to 552 (FPILNPALSQ…SSETPRPQPV (67 aa)) is disordered. 3 positions are modified to phosphoserine: S497, S511, and S516. Over residues 523–536 (PHMPPAASIPPPPG) the composition is skewed to pro residues. The segment at 623 to 665 (CLMCQKLVQPSELHPMACTHALHKECIKFWAQTNTNDTCPFCP) adopts an RING-type; atypical zinc-finger fold.

The chain is RING finger protein 214 (Rnf214) from Mus musculus (Mouse).